The chain runs to 1505 residues: Phosphatidylinositol 3-kinase C2 domain-containing subunit gamma (1505 aa).

The segment at 1-32 (MAYNWQTEPNRAEPQEGGHDHQQCHHADQHLS) is disordered. Basic and acidic residues predominate over residues 10–31 (NRAEPQEGGHDHQQCHHADQHL). Residues 278 to 370 (PSRLFADTQF…IQLHLQRSRD (93 aa)) enclose the PI3K-RBD domain. One can recognise a C2 PI3K-type domain in the interval 540–688 (LHSHLSFTVC…TPLTLQIDFP (149 aa)). A PIK helical domain is found at 703–879 (RTDHQEPPRE…QELLAALQFC (177 aa)). The region spanning 948–1226 (DRDACSYFTS…KIKQSLECFP (279 aa)) is the PI3K/PI4K catalytic domain. Residues 954 to 960 (YFTSNAL) are G-loop. Positions 1090-1098 (GVCDRHNDN) are catalytic loop. The interval 1109-1135 (HIDFGKFLGHAQTFGGIKRDRAPFIFT) is activation loop. In terms of domain architecture, PX spans 1259-1371 (LNKTRTIQRV…SFFLSEHIQQ (113 aa)). The C2 domain occupies 1384 to 1505 (HSPDKSPQVQ…KWYPLGNSII (122 aa)).

The protein belongs to the PI3/PI4-kinase family. In terms of tissue distribution, predominantly expressed in normal liver. High levels also found in regenerating liver. Very low levels found in heart and testis.

It localises to the membrane. It catalyses the reaction a 1,2-diacyl-sn-glycero-3-phospho-(1D-myo-inositol) + ATP = a 1,2-diacyl-sn-glycero-3-phospho-(1D-myo-inositol-3-phosphate) + ADP + H(+). The enzyme catalyses a 1,2-diacyl-sn-glycero-3-phospho-(1D-myo-inositol 4-phosphate) + ATP = a 1,2-diacyl-sn-glycero-3-phospho-(1D-myo-inositol-3,4-bisphosphate) + ADP + H(+). Generates phosphatidylinositol 3-phosphate (PtdIns3P) and phosphatidylinositol 3,4-bisphosphate (PtdIns(3,4)P2) that act as second messengers. May play a role in SDF1A-stimulated chemotaxis. This chain is Phosphatidylinositol 3-kinase C2 domain-containing subunit gamma (Pik3c2g), found in Rattus norvegicus (Rat).